The chain runs to 173 residues: NADH-ubiquinone oxidoreductase chain 6 (173 aa).

Helical transmembrane passes span 1-21 (MTYF…AVAS), 27-47 (YGVV…VSLG), 48-68 (VSFV…VVFV), 87-107 (VVGY…LGGL), and 139-159 (CGVG…FVVL).

Belongs to the complex I subunit 6 family. As to quaternary structure, core subunit of respiratory chain NADH dehydrogenase (Complex I) which is composed of 45 different subunits.

Its subcellular location is the mitochondrion inner membrane. It carries out the reaction a ubiquinone + NADH + 5 H(+)(in) = a ubiquinol + NAD(+) + 4 H(+)(out). In terms of biological role, core subunit of the mitochondrial membrane respiratory chain NADH dehydrogenase (Complex I) which catalyzes electron transfer from NADH through the respiratory chain, using ubiquinone as an electron acceptor. Essential for the catalytic activity and assembly of complex I. This is NADH-ubiquinone oxidoreductase chain 6 (MT-ND6) from Gallus gallus (Chicken).